A 1194-amino-acid chain; its full sequence is Immunoglobulin superfamily member 3 (1194 aa).

The first 19 residues, 1 to 19 (MKCFFPVLSCLAVLGVVSA), serve as a signal peptide directing secretion. Ig-like C2-type domains follow at residues 20-138 (QRQV…AKMN), 143-262 (PDSL…WYAM), 276-386 (PTDK…KTVT), 401-539 (PIVV…VSIT), 545-661 (FAVT…WTRL), 676-803 (PVTK…EEVS), 813-945 (PDSR…TAVT), and 949-1097 (PDAA…YRLT). The Extracellular segment spans residues 20-1124 (QRQVTVQEGP…LQSLICSNDA (1105 aa)). Intrachain disulfides connect Cys-42-Cys-120 and Cys-167-Cys-246. Residue Asn-43 is glycosylated (N-linked (GlcNAc...) asparagine). The short motif at 250–252 (EWI) is the EWI motif element. Cysteines 302 and 376 form a disulfide. N-linked (GlcNAc...) asparagine glycosylation occurs at Asn-418. Intrachain disulfides connect Cys-432–Cys-511, Cys-566–Cys-645, Cys-701–Cys-782, Cys-838–Cys-918, and Cys-974–Cys-1080. N-linked (GlcNAc...) asparagine glycosylation occurs at Asn-842. The interval 997 to 1030 (GGGKRGSLGIDEQEEEEEEEDISQEEDSEDPTER) is disordered. Positions 1007–1026 (DEQEEEEEEEDISQEEDSED) are enriched in acidic residues. The N-linked (GlcNAc...) asparagine glycan is linked to Asn-1077. The helical transmembrane segment at 1125 to 1145 (LFYFVFFYPFPIFGILIITIL) threads the bilayer. Residues 1146-1194 (LVRFKSRNSSKNSEGKNGVPLLWIKEPHLNYSPTCLEPPVLSIHPGAID) lie on the Cytoplasmic side of the membrane.

As to expression, expressed in the lacrimal duct and lacrimal gland.

The protein resides in the membrane. The sequence is that of Immunoglobulin superfamily member 3 (Igsf3) from Mus musculus (Mouse).